A 320-amino-acid chain; its full sequence is Protein HEXIM1 (320 aa).

The segment at 1 to 124 (MAEPLLSEFQ…RRRPSKKKRL (124 aa)) is disordered. The segment covering 9 to 19 (FQHQPQTSNCT) has biased composition (polar residues). Positions 24–47 (VHEERNPDRPPGAEERVPEEDSRW) are enriched in basic and acidic residues. Position 98 is a phosphoserine (Ser98). A compositionally biased stretch (basic residues) spans 109 to 124 (VGKKKHRRRPSKKKRL). The tract at residues 111–138 (KKKHRRRPSKKKRLWKPYYTLTWEEKKK) is basic region; mediates nuclear localization and interaction with 7SK snRNA and NR3C1. An interaction with P-TEFb region spans residues 163 to 166 (PYNT). The autoinhibitory acidic region; in absence of 7SK snRNA interacts with the basic region preventing interaction with P-TEFb and modulating subcellular localization stretch occupies residues 171 to 211 (MDDHDQEEPDLKTGLYPKRAAAKSDDTSDEDFMEEAGEEDG). Positions 174-223 (HDQEEPDLKTGLYPKRAAAKSDDTSDEDFMEEAGEEDGGSDGMGGDGSEF) are disordered. A Phosphoserine modification is found at Ser194. Thr197 carries the post-translational modification Phosphothreonine. A compositionally biased stretch (acidic residues) spans 197–212 (TSDEDFMEEAGEEDGG). Residues Ser198, Ser213, and Ser221 each carry the phosphoserine modification. Residues 244-310 (SKQELIKEYL…LTENELHRQQ (67 aa)) adopt a coiled-coil conformation. The tract at residues 247 to 275 (ELIKEYLELEKCLSRMEDENNRLRLESQR) is mediates interaction with CCNT1. Residues 271 to 316 (LESQRLDGDDARVRELELELDRLRAENLQLLTENELHRQQERAPLS) form a required for inhibition of ESR1-dependent transcription region.

It belongs to the HEXIM family. As to quaternary structure, homooligomer and heterooligomer with HEXIM2; probably dimeric. Core component of the 7SK RNP complex, at least composed of 7SK RNA, LARP7, MEPCE, HEXIM1 (or HEXIM2) and P-TEFb (composed of CDK9 and CCNT1/cyclin-T1). Interacts with the N-CoR complex through NCOR1. Interacts with ESR1 and NR3C1. May interact with NF-kappa-B through RELA. Interacts with CCNT2; mediates formation of a tripartite complex with KPNA2. Part of the HDP-RNP complex composed of at least HEXIM1, PRKDC, XRCC5, XRCC6, paraspeckle proteins (SFPQ, NONO, PSPC1, RBM14, and MATR3) and NEAT1 non-coding RNA.

It is found in the nucleus. Its subcellular location is the cytoplasm. Functionally, transcriptional regulator which functions as a general RNA polymerase II transcription inhibitor. Core component of the 7SK RNP complex: in cooperation with 7SK snRNA sequesters P-TEFb in a large inactive 7SK snRNP complex preventing RNA polymerase II phosphorylation and subsequent transcriptional elongation. May also regulate NF-kappa-B, ESR1, NR3C1 and CIITA-dependent transcriptional activity. Plays a role in the regulation of DNA virus-mediated innate immune response by assembling into the HDP-RNP complex, a complex that serves as a platform for IRF3 phosphorylation and subsequent innate immune response activation through the cGAS-STING pathway. This Bos taurus (Bovine) protein is Protein HEXIM1 (HEXIM1).